The primary structure comprises 154 residues: Myoglobin (154 aa).

Positions 2 to 148 (GLSDGEWQLV…FRNDMAAQYK (147 aa)) constitute a Globin domain. The residue at position 4 (Ser4) is a Phosphoserine. His65 contributes to the nitrite binding site. Residue His65 coordinates O2. Thr68 is modified (phosphothreonine). Heme b is bound at residue His94.

It belongs to the globin family. Monomeric.

It localises to the cytoplasm. Its subcellular location is the sarcoplasm. The enzyme catalyses Fe(III)-heme b-[protein] + nitric oxide + H2O = Fe(II)-heme b-[protein] + nitrite + 2 H(+). It carries out the reaction H2O2 + AH2 = A + 2 H2O. Functionally, monomeric heme protein which primary function is to store oxygen and facilitate its diffusion within muscle tissues. Reversibly binds oxygen through a pentacoordinated heme iron and enables its timely and efficient release as needed during periods of heightened demand. Depending on the oxidative conditions of tissues and cells, and in addition to its ability to bind oxygen, it also has a nitrite reductase activity whereby it regulates the production of bioactive nitric oxide. Under stress conditions, like hypoxia and anoxia, it also protects cells against reactive oxygen species thanks to its pseudoperoxidase activity. This is Myoglobin (MB) from Bos mutus grunniens (Wild yak).